We begin with the raw amino-acid sequence, 357 residues long: Norreticuline-7-O-methyltransferase (357 aa).

Aspartate 225 is an S-adenosyl-L-methionine binding site. The active-site Proton acceptor is the histidine 263.

Belongs to the class I-like SAM-binding methyltransferase superfamily. Cation-independent O-methyltransferase family. Expressed instems, leaves, roots and seedlings.

Its function is as follows. Involved in the biosynthesis of benzylisoquinoline alkaloids. Catalyzes specifically the methylation of norreticuline at position seven to produce norlaudanine. No activity with norcoclaurine, reticuline, norlaudanosoline, norisoorientaline, scoulerine, salutaridinol, oripavine, salsolinol, codeine or morphine. Involved in papaverine biosynthesis. The polypeptide is Norreticuline-7-O-methyltransferase (Papaver somniferum (Opium poppy)).